The following is a 337-amino-acid chain: Alanine racemase (337 aa).

The active-site Proton acceptor; specific for D-alanine is K33. K33 is modified (N6-(pyridoxal phosphate)lysine). R118 provides a ligand contact to substrate. Y246 serves as the catalytic Proton acceptor; specific for L-alanine. Residue M292 coordinates substrate.

It belongs to the alanine racemase family. The cofactor is pyridoxal 5'-phosphate.

It catalyses the reaction L-alanine = D-alanine. It functions in the pathway amino-acid biosynthesis; D-alanine biosynthesis; D-alanine from L-alanine: step 1/1. In terms of biological role, catalyzes the interconversion of L-alanine and D-alanine. May also act on other amino acids. The polypeptide is Alanine racemase (alr) (Campylobacter curvus (strain 525.92)).